A 144-amino-acid polypeptide reads, in one-letter code: Small ribosomal subunit protein eS19A (144 aa).

It belongs to the eukaryotic ribosomal protein eS19 family. As to quaternary structure, component of the small ribosomal subunit (SSU). Mature yeast ribosomes consist of a small (40S) and a large (60S) subunit. The 40S small subunit contains 1 molecule of ribosomal RNA (18S rRNA) and 33 different proteins (encoded by 57 genes). The large 60S subunit contains 3 rRNA molecules (25S, 5.8S and 5S rRNA) and 46 different proteins (encoded by 81 genes).

It is found in the cytoplasm. In terms of biological role, component of the ribosome, a large ribonucleoprotein complex responsible for the synthesis of proteins in the cell. The small ribosomal subunit (SSU) binds messenger RNAs (mRNAs) and translates the encoded message by selecting cognate aminoacyl-transfer RNA (tRNA) molecules. The large subunit (LSU) contains the ribosomal catalytic site termed the peptidyl transferase center (PTC), which catalyzes the formation of peptide bonds, thereby polymerizing the amino acids delivered by tRNAs into a polypeptide chain. The nascent polypeptides leave the ribosome through a tunnel in the LSU and interact with protein factors that function in enzymatic processing, targeting, and the membrane insertion of nascent chains at the exit of the ribosomal tunnel. eS19 is required for proper maturation of the small (40S) ribosomal subunit. Binds to 40S pre-ribosomal particles, probably required after association of NOC4 but before association of ENP1, TSR1 and RIO2 with 20/21S pre-rRNA. The chain is Small ribosomal subunit protein eS19A from Saccharomyces cerevisiae (strain ATCC 204508 / S288c) (Baker's yeast).